The sequence spans 222 residues: Ribonuclease 3 (222 aa).

Positions 1–19 are cleaved as a signal peptide; the sequence is MKFFIFILALQQLYVQSFA. RNA is bound at residue Gln-30. A disulfide bond links Cys-36 and Cys-42. RNA contacts are provided by residues His-57, Phe-107, 110–111, and 114–115; these read HE and KH. The active-site Proton donor is the His-57. Cystine bridges form between Cys-72/Cys-118, Cys-178/Cys-213, and Cys-194/Cys-205. Glu-111 is an active-site residue. His-115 functions as the Proton acceptor in the catalytic mechanism.

It belongs to the RNase T2 family.

The catalysed reaction is a ribonucleotidyl-ribonucleotide-RNA + H2O = a 3'-end 3'-phospho-ribonucleotide-RNA + a 5'-end dephospho-ribonucleoside-RNA + H(+). Functionally, may remobilize phosphate, particularly when cells senesce or when phosphate becomes limiting. This Arabidopsis thaliana (Mouse-ear cress) protein is Ribonuclease 3 (RNS3).